Here is a 500-residue protein sequence, read N- to C-terminus: Protein FAM83F (500 aa).

Alanine 2 is subject to N-acetylalanine. The segment at 2-300 is DUF1669; sequence AESQLNCLDE…LYAISEEVDL (299 aa). Serine 4 is modified (phosphoserine). Disordered stretches follow at residues 82-109, 347-366, and 391-500; these read NARGKSKAKAKAPAPAPAESGESLAYWP, QQREAGGNPEGQEEGASGGE, and IPLG…CVIS. A compositionally biased stretch (basic and acidic residues) spans 397–419; the sequence is SQKDGRMVSHMHRDLKPKSREAP. 2 stretches are compositionally biased toward low complexity: residues 425 to 442 and 458 to 468; these read GEAARGEAAPARRFSSRL and SSVSTETSEVE. The segment covering 477-500 has biased composition (polar residues); it reads ENSSADISGKTSPSSAKPSNCVIS. Serine 479 bears the Phosphoserine mark.

Belongs to the FAM83 family. In terms of assembly, directly interacts (via DUF1669) with CSNK1A1 and CSNK1A1L.

It localises to the cell membrane. The chain is Protein FAM83F (FAM83F) from Homo sapiens (Human).